The following is a 107-amino-acid chain: Thioredoxin (107 aa).

The 106-residue stretch at 2-107 (PSPIQVTDFS…TLTNALKKYL (106 aa)) folds into the Thioredoxin domain. Active-site nucleophile residues include C32 and C35. The cysteines at positions 32 and 35 are disulfide-linked.

The protein belongs to the thioredoxin family.

It is found in the plastid. The protein localises to the chloroplast. Functionally, participates in various redox reactions through the reversible oxidation of its active center dithiol to a disulfide and catalyzes dithiol-disulfide exchange reactions. The sequence is that of Thioredoxin (trxA) from Cyanidium caldarium (Red alga).